Consider the following 109-residue polypeptide: Staphostatin B (109 aa).

The binds to staphopain B stretch occupies residues 97-101; the sequence is IGTSR.

Belongs to the protease inhibitor I57 (SspC) family. In terms of assembly, forms a stable non-covalent complex with prematurely activated/folded SspB.

Its subcellular location is the cytoplasm. In terms of biological role, specifically inhibits the cysteine protease staphopain B (SspB) by blocking the active site of the enzyme. Probably required to protect cytoplasmic proteins from being degraded by prematurely activated/folded prostaphopain B. Also involved in growth capacity, viability and bacterial morphology. The sequence is that of Staphostatin B (sspC) from Staphylococcus aureus (strain NCTC 8325 / PS 47).